Reading from the N-terminus, the 180-residue chain is Cell number regulator 7 (180 aa).

Residues 80-102 (AAAGAIYTLLACFTGFQCHWIYS) form a helical membrane-spanning segment.

This sequence belongs to the cornifelin family. Expressed in roots, leaves, immature ears and silks. Detected preferentially in silks.

Its subcellular location is the membrane. This is Cell number regulator 7 (CNR7) from Zea mays (Maize).